A 327-amino-acid polypeptide reads, in one-letter code: Deoxynucleotidyltransferase terminal-interacting protein 1 (327 aa).

A compositionally biased stretch (gly residues) spans 1-11 (MGATGDTGGPR). Disordered regions lie at residues 1-34 (MGATGDTGGPRPGTESRRPGNVGNAGAAGQPVLT) and 146-172 (KRGRQAEEESHREAPFPKRGKVGLPGH). The segment at 55-146 (MTTSFTDPAI…RLAHELPGIK (92 aa)) is important for dimerization. Basic and acidic residues predominate over residues 146 to 161 (KRGRQAEEESHREAPF). Positions 157–171 (REAPFPKRGKVGLPG) form a DNA-binding region, a.T hook. The Nuclear localization signal motif lies at 162-168 (PKRGKVG). An important for DNA and nucleosome binding region spans residues 195–314 (REGPKWDPAR…MRKYMETLRT (120 aa)). A DNA-binding region (H-T-H motif) is located at residues 214–235 (GSRANKALGMGGTRGRIYIKHP).

In terms of assembly, monomer and homodimer. A minor proportion may form homotrimers. Interacts with ZNF541. Interacts with the terminal deoxynucleotidyltransferase DNTT. Interacts with TRERF1. Identified in a histone deacetylase complex that contains DNTTIP1, HDAC1 and MIDEAS; this complex assembles into a tetramer that contains four copies of each protein chain. Component of a histone deacetylase complex containing DNTTIP1, ZNF541, HDAC1 and HDAC2. Identified in a complex with KCTD19, HDAC1, HDAC2 and ZNF541. Expressed in thymus, bone marrow and spleen.

The protein localises to the nucleus. In terms of biological role, increases DNTT terminal deoxynucleotidyltransferase activity (in vitro). Also acts as a transcriptional regulator, binding to the consensus sequence 5'-GNTGCATG-3' following an AT-tract. Associates with RAB20 promoter and positively regulates its transcription. Binds DNA and nucleosomes; may recruit HDAC1 complexes to nucleosomes or naked DNA. The sequence is that of Deoxynucleotidyltransferase terminal-interacting protein 1 (Dnttip1) from Rattus norvegicus (Rat).